Reading from the N-terminus, the 326-residue chain is Vascular endothelial growth factor D (326 aa).

A signal peptide spans 1-21 (MYGEWAAVNILMMSYVYLVQG). The propeptide occupies 22–93 (FSIEHRAVKD…SRSTSHRSTR (72 aa)). Disulfide bonds link C116–C158, C147–C194, and C151–C196. N-linked (GlcNAc...) asparagine glycosylation is found at N160 and N190. Positions 211–326 (SIQIPEEDQC…CRSMVFSLSP (116 aa)) are excised as a propeptide. A 1; approximate repeat occupies 227 to 242 (CPVDMLWDNTKCKCVL). The segment at 227 to 317 (CPVDMLWDNT…KHKMFHPDTC (91 aa)) is 4 X 16 AA repeats of C-X(10)-C-X-C-X(1,3)-C. Repeat copies occupy residues 263–278 (CGPH…ECVC) and 282–298 (CPGD…CFEC). N292 carries N-linked (GlcNAc...) asparagine glycosylation. Residues 306–317 (CQKHKMFHPDTC) form a 4; truncated repeat.

This sequence belongs to the PDGF/VEGF growth factor family. As to quaternary structure, homodimer; non-covalent and antiparallel. In terms of processing, undergoes a complex proteolytic maturation which generates a variety of processed secreted forms with increased activity toward VEGFR-3 and VEGFR-2. VEGF-D first form an antiparallel homodimer linked by disulfide bonds before secretion. The fully processed VEGF-D is composed mostly of two VEGF homology domains (VHDs) bound by non-covalent interactions. In terms of tissue distribution, highly expressed in the spleen, kidney, lung, tongue, ovary and mammary gland.

It localises to the secreted. Growth factor active in angiogenesis, lymphangiogenesis and endothelial cell growth, stimulating their proliferation and migration and also has effects on the permeability of blood vessels. May function in the formation of the venous and lymphatic vascular systems during embryogenesis, and also in the maintenance of differentiated lymphatic endothelium in adults. Binds and activates VEGFR-3 (Flt4) receptor. This Rattus norvegicus (Rat) protein is Vascular endothelial growth factor D.